The chain runs to 357 residues: Actin, macronuclear (357 aa).

It belongs to the actin family. In terms of processing, met-1 may be removed after translation.

The protein resides in the cytoplasm. The protein localises to the cytoskeleton. It carries out the reaction ATP + H2O = ADP + phosphate + H(+). Actins are highly conserved proteins that are involved in various types of cell motility and are ubiquitously expressed in all eukaryotic cells. The chain is Actin, macronuclear from Oxytricha fallax.